A 178-amino-acid chain; its full sequence is MADGKAGDEKPEKSQRAGAAGGPEEEAEKPVKTKTVSSSNGGESSSRSAEKRSAEEEAADLPTKPTKISKFGFAIGSQTTKKASAISIKLGSSKPKETVPTLAPKTLSVAAAFNEDEDSEPEEMPPEAKMRMKNIGRDTPTSAGPNSFNKGKHGFSDNQKLWERNIKSHLGNVHDQDN.

The span at 1-15 (MADGKAGDEKPEKSQ) shows a compositional bias: basic and acidic residues. The disordered stretch occupies residues 1–82 (MADGKAGDEK…FAIGSQTTKK (82 aa)). An N-acetylalanine modification is found at A2. The span at 37-47 (SSSNGGESSSR) shows a compositional bias: low complexity. S53 is subject to Phosphoserine. K64 bears the N6-acetyllysine mark. A phosphoserine mark is found at S77, S87, and S119. Residues 134 to 178 (NIGRDTPTSAGPNSFNKGKHGFSDNQKLWERNIKSHLGNVHDQDN) form a disordered region. At T139 the chain carries Phosphothreonine. A compositionally biased stretch (polar residues) spans 139 to 149 (TPTSAGPNSFN). S147 carries the post-translational modification Phosphoserine. An N6-acetyllysine mark is found at K150 and K152. Over residues 160-178 (KLWERNIKSHLGNVHDQDN) the composition is skewed to basic and acidic residues.

As to quaternary structure, interacts with UHRF2/NIRF. Post-translationally, ubiquitinated; mediated by UHRF2 and leading to its subsequent proteasomal degradation. N-terminally acetylated in a HYPK-dependent manner by the NatA acetyltransferase complex which is composed of NAA10 and NAA15.

It localises to the nucleus. Functionally, may be involved in cell cycle regulation. This is PEST proteolytic signal-containing nuclear protein (PCNP) from Homo sapiens (Human).